Here is a 188-residue protein sequence, read N- to C-terminus: HTH-type transcriptional regulator Mb3439c (188 aa).

Positions 17–77 (EEVAAAILQA…AVLDHLGTKL (61 aa)) constitute an HTH tetR-type domain. Positions 40–59 (SIRDIAARSKVNHGLVFRHF) form a DNA-binding region, H-T-H motif.

Negatively regulates the expression of sulfate ester dioxygenase Mb3440 and its own expression. In Mycobacterium bovis (strain ATCC BAA-935 / AF2122/97), this protein is HTH-type transcriptional regulator Mb3439c.